The primary structure comprises 273 residues: Protein BMH2 (273 aa).

Position 2 is an N-acetylserine (Ser2). The disordered stretch occupies residues 236-273; that stretch reads DISESGQEDQQQQQQQQQQQQQQQQQAPAEQTQGEPTK. Low complexity predominate over residues 245–261; that stretch reads QQQQQQQQQQQQQQQQQ. Polar residues predominate over residues 262–273; that stretch reads APAEQTQGEPTK.

Belongs to the 14-3-3 family. As to quaternary structure, interacts with NTH1 (via N-terminus when phosphorylated by PKA); the interaction is direct and activates NTH1. Interacts with FIN1.

The protein localises to the cytoplasm. The protein resides in the nucleus. This Saccharomyces cerevisiae (strain ATCC 204508 / S288c) (Baker's yeast) protein is Protein BMH2 (BMH2).